A 425-amino-acid chain; its full sequence is Serine/threonine-protein kinase VRK1 (425 aa).

One can recognise a Protein kinase domain in the interval 38-329; the sequence is WKLGSAVGQG…KLRGILQQGL (292 aa). Residues 44–52 and Lys72 contribute to the ATP site; that span reads VGQGGFGLL. Catalysis depends on Asp178, which acts as the Proton acceptor. A disordered region spans residues 343-425; that stretch reads GVATNSTSLP…KSRGRPKKNS (83 aa). Over residues 415–425 the composition is skewed to basic residues; that stretch reads KKSRGRPKKNS.

Belongs to the protein kinase superfamily. CK1 Ser/Thr protein kinase family. VRK subfamily.

The protein resides in the nucleus. Its subcellular location is the cytoplasm. It localises to the cajal body. It carries out the reaction L-seryl-[protein] + ATP = O-phospho-L-seryl-[protein] + ADP + H(+). The catalysed reaction is L-threonyl-[protein] + ATP = O-phospho-L-threonyl-[protein] + ADP + H(+). In terms of biological role, serine/threonine kinase involved in the regulation of key cellular processes including the cell cycle, nuclear condensation, transcription regulation, and DNA damage response. Controls chromatin organization and remodeling by mediating phosphorylation of histone H3 on 'Thr-4' and histone H2AX (H2aXT4ph). It also phosphorylates KAT5 in response to DNA damage, promoting KAT5 association with chromatin and histone acetyltransferase activity. Is involved in the regulation of cell cycle progression of neural progenitors, and is required for proper cortical neuronal migration. Is involved in neurite elongation and branching in motor neurons, and has an essential role in Cajal bodies assembly, acting through COIL phosphorylation and the control of coilin degradation. Involved in Golgi disassembly during the cell cycle: following phosphorylation by PLK3 during mitosis, it is required to induce Golgi fragmentation. Phosphorylates BANF1: disrupts its ability to bind DNA, reduces its binding to LEM domain-containing proteins and causes its relocalization from the nucleus to the cytoplasm. Phosphorylates TP53BP1 and p53/TP53 on 'Thr-18', preventing the interaction between p53/TP53 and MDM2. Phosphorylates ATF2 which activates its transcriptional activity. Phosphorylates JUN. The sequence is that of Serine/threonine-protein kinase VRK1 (vrk1) from Danio rerio (Zebrafish).